A 1380-amino-acid chain; its full sequence is DNA-directed RNA polymerase subunit beta (1380 aa).

The protein belongs to the RNA polymerase beta chain family. In terms of assembly, the RNAP catalytic core consists of 2 alpha, 1 beta, 1 beta' and 1 omega subunit. When a sigma factor is associated with the core the holoenzyme is formed, which can initiate transcription.

The enzyme catalyses RNA(n) + a ribonucleoside 5'-triphosphate = RNA(n+1) + diphosphate. In terms of biological role, DNA-dependent RNA polymerase catalyzes the transcription of DNA into RNA using the four ribonucleoside triphosphates as substrates. This Sinorhizobium fredii (strain NBRC 101917 / NGR234) protein is DNA-directed RNA polymerase subunit beta.